The sequence spans 706 residues: Translation initiation factor IF-2 (706 aa).

The segment at 55–117 (KEVNSDSNQE…PTMKDEKGLI (63 aa)) is disordered. The segment covering 67 to 81 (VNTDDKLDKIDKPNK) has biased composition (basic and acidic residues). Residues 93–108 (KNKKSKKKQKNKKKGP) are compositionally biased toward basic residues. Residues 208-375 (SRPPVVTVMG…MILLVSEVEE (168 aa)) form the tr-type G domain. Positions 217–224 (GHVDHGKT) are G1. Position 217–224 (217–224 (GHVDHGKT)) interacts with GTP. The G2 stretch occupies residues 242 to 246 (GITQH). The segment at 263 to 266 (DTPG) is G3. Residues 263–267 (DTPGH) and 317–320 (NKID) each bind GTP. The interval 317–320 (NKID) is G4. The segment at 353 to 355 (SAI) is G5.

This sequence belongs to the TRAFAC class translation factor GTPase superfamily. Classic translation factor GTPase family. IF-2 subfamily.

It is found in the cytoplasm. One of the essential components for the initiation of protein synthesis. Protects formylmethionyl-tRNA from spontaneous hydrolysis and promotes its binding to the 30S ribosomal subunits. Also involved in the hydrolysis of GTP during the formation of the 70S ribosomal complex. In Alkaliphilus metalliredigens (strain QYMF), this protein is Translation initiation factor IF-2.